Here is a 448-residue protein sequence, read N- to C-terminus: Probable glycine dehydrogenase (decarboxylating) subunit 1 (448 aa).

The protein belongs to the GcvP family. N-terminal subunit subfamily. In terms of assembly, the glycine cleavage system is composed of four proteins: P, T, L and H. In this organism, the P 'protein' is a heterodimer of two subunits.

The enzyme catalyses N(6)-[(R)-lipoyl]-L-lysyl-[glycine-cleavage complex H protein] + glycine + H(+) = N(6)-[(R)-S(8)-aminomethyldihydrolipoyl]-L-lysyl-[glycine-cleavage complex H protein] + CO2. In terms of biological role, the glycine cleavage system catalyzes the degradation of glycine. The P protein binds the alpha-amino group of glycine through its pyridoxal phosphate cofactor; CO(2) is released and the remaining methylamine moiety is then transferred to the lipoamide cofactor of the H protein. This Geobacillus kaustophilus (strain HTA426) protein is Probable glycine dehydrogenase (decarboxylating) subunit 1.